A 215-amino-acid chain; its full sequence is 2-phospho-L-lactate guanylyltransferase (215 aa).

It belongs to the CofC family. Homodimer.

It carries out the reaction (2S)-2-phospholactate + GTP + H(+) = (2S)-lactyl-2-diphospho-5'-guanosine + diphosphate. It functions in the pathway cofactor biosynthesis; coenzyme F420 biosynthesis. Functionally, guanylyltransferase that catalyzes the activation of (2S)-2-phospholactate (2-PL) as (2S)-lactyl-2-diphospho-5'-guanosine, via the condensation of 2-PL with GTP. It is involved in the biosynthesis of coenzyme F420, a hydride carrier cofactor. The chain is 2-phospho-L-lactate guanylyltransferase from Methanococcoides burtonii (strain DSM 6242 / NBRC 107633 / OCM 468 / ACE-M).